Consider the following 131-residue polypeptide: Small ribosomal subunit protein uS12 (131 aa).

At Asp89 the chain carries 3-methylthioaspartic acid. A disordered region spans residues 106-131; sequence GVDGRKQGRSKYGAKKAKVAKTASAK. Residues 112–124 show a composition bias toward basic residues; the sequence is QGRSKYGAKKAKV.

Belongs to the universal ribosomal protein uS12 family. In terms of assembly, part of the 30S ribosomal subunit. Contacts proteins S8 and S17. May interact with IF1 in the 30S initiation complex.

With S4 and S5 plays an important role in translational accuracy. Functionally, interacts with and stabilizes bases of the 16S rRNA that are involved in tRNA selection in the A site and with the mRNA backbone. Located at the interface of the 30S and 50S subunits, it traverses the body of the 30S subunit contacting proteins on the other side and probably holding the rRNA structure together. The combined cluster of proteins S8, S12 and S17 appears to hold together the shoulder and platform of the 30S subunit. This chain is Small ribosomal subunit protein uS12, found in Endomicrobium trichonymphae.